Reading from the N-terminus, the 200-residue chain is uncharacterized protein (200 aa).

One can recognise a Response regulatory domain in the interval 3–119 (RLFIAEDQRM…DLADAIRKCV (117 aa)). The residue at position 54 (Asp54) is a 4-aspartylphosphate. One can recognise an HTH luxR-type domain in the interval 133–198 (MMRDENPLTV…EAASIAEEKG (66 aa)). Positions 157-176 (TKDITLELYLSQGTVRNYIS) form a DNA-binding region, H-T-H motif.

In terms of processing, phosphorylated by YvfT.

The protein resides in the cytoplasm. In terms of biological role, member of the two-component regulatory system YvfT/YvfU. This is an uncharacterized protein from Bacillus subtilis (strain 168).